We begin with the raw amino-acid sequence, 354 residues long: Selenide, water dikinase (354 aa).

Cysteine 23 is a catalytic residue. ATP contacts are provided by residues lysine 26 and 54 to 56; that span reads TSD. Aspartate 57 is a binding site for Mg(2+). ATP-binding positions include aspartate 74, aspartate 97, and 145–147; that span reads GHS. Aspartate 97 serves as a coordination point for Mg(2+). Aspartate 233 serves as a coordination point for Mg(2+).

The protein belongs to the selenophosphate synthase 1 family. Class I subfamily. In terms of assembly, homodimer. The cofactor is Mg(2+).

The catalysed reaction is hydrogenselenide + ATP + H2O = selenophosphate + AMP + phosphate + 2 H(+). Synthesizes selenophosphate from selenide and ATP. The chain is Selenide, water dikinase from Burkholderia cenocepacia (strain ATCC BAA-245 / DSM 16553 / LMG 16656 / NCTC 13227 / J2315 / CF5610) (Burkholderia cepacia (strain J2315)).